A 317-amino-acid polypeptide reads, in one-letter code: L-lactate dehydrogenase 2 (317 aa).

NAD(+) is bound by residues valine 16, aspartate 37, lysine 42, tyrosine 68, and 82 to 83 (GA). Residues glutamine 85 and arginine 91 each coordinate substrate. Residues threonine 104, 121 to 123 (ASN), and threonine 146 each bind NAD(+). Position 123–126 (123–126 (NPVD)) interacts with substrate. 151-154 (DTTR) serves as a coordination point for substrate. Positions 156 and 171 each coordinate beta-D-fructose 1,6-bisphosphate. Histidine 178 acts as the Proton acceptor in catalysis. Position 223 is a phosphotyrosine (tyrosine 223). Threonine 232 contacts substrate.

This sequence belongs to the LDH/MDH superfamily. LDH family. In terms of assembly, homotetramer.

The protein localises to the cytoplasm. The enzyme catalyses (S)-lactate + NAD(+) = pyruvate + NADH + H(+). Its pathway is fermentation; pyruvate fermentation to lactate; (S)-lactate from pyruvate: step 1/1. Allosterically activated by fructose 1,6-bisphosphate (FBP). Its function is as follows. Catalyzes the conversion of lactate to pyruvate. In Enterococcus faecalis (strain ATCC 700802 / V583), this protein is L-lactate dehydrogenase 2.